Reading from the N-terminus, the 140-residue chain is C-type lectin 6 (140 aa).

An N-terminal signal peptide occupies residues 1–23 (MGRLVFVSFGLLVVFLSLSGTGA). Cystine bridges form between C25-C36, C53-C138, and C115-C130. The C-type lectin domain maps to 32 to 139 (YEGHCYRVFQ…CSKTHNVICK (108 aa)).

The protein belongs to the snaclec family. As to quaternary structure, heteromultimer; disulfide-linked. As to expression, expressed by the venom gland.

The protein localises to the secreted. Interferes with one step of hemostasis (modulation of platelet aggregation, or coagulation cascade, for example). In Crotalus adamanteus (Eastern diamondback rattlesnake), this protein is C-type lectin 6.